The primary structure comprises 351 residues: Glycerol-3-phosphate dehydrogenase 1-like protein (351 aa).

Position 11–16 (11–16) interacts with NAD(+); it reads GSGNWG. Substrate is bound at residue Lys-121. Ala-154 is a binding site for NAD(+). Lys-205 serves as the catalytic Proton acceptor. Arg-271, Lys-298, and Gln-300 together coordinate NAD(+). Position 271-272 (271-272) interacts with substrate; it reads RN.

It belongs to the NAD-dependent glycerol-3-phosphate dehydrogenase family.

Its subcellular location is the cytoplasm. The catalysed reaction is sn-glycerol 3-phosphate + NAD(+) = dihydroxyacetone phosphate + NADH + H(+). Functionally, plays a role in regulating cardiac sodium current. In Danio rerio (Zebrafish), this protein is Glycerol-3-phosphate dehydrogenase 1-like protein (gpd1l).